The primary structure comprises 651 residues: MQRFKISSEFNPSGDQPGAIDSLVRGISCGAKEQTLLGVTGSGKTFTMASVIEQTQRPAIIIAHNKTLAAQLHEEMRSFFPENAVEYFVSYYDYYQPEAYIPQSDVYIEKDALINDKIDLLRHSATRSLLERRDVVVVASVSCIYGLGSPELYSEMTVPIALGMKLDMCQLQERLVELQYKHGNRYERGNFSVQGDVLSVFPSHYEDRIWKISFFGDEVDSIQEVDPKSGMVTLKLEKIKIFPNSHYVTPRPTLLQAISEIEKELDECALQFKQCNKIVEADRIVERTRFDIEMMRETGTCKGIENYSRYLCGKEAGDPPNTLLDYLPQDAIMFIDESHMTVPQIRAMYNGDRMRKANLINHGFRMPSALDNRPLTFAEWEDRKPTVVYVSATPGQYELQQTGGVATEQLIRPTGLLDPVCIVKGADGQIHDVMCESQATIARGYRVLITTLTKKMAENLTEYMREMGIKVAYLHSDVKTLERIEIISDLRLGVIDVLVGVNLMREGLDIPECALVGILDADKEGFLRSTTSLIQTIGRAARNVEGRVILYANVITKSMRTAMEETDRRRDIQRKYNQEHSIVPRTIQKPVQTSLSERVGSSRKKVSRDTNTDPANRDIVELQKEMLLCAENLDFERAVEIRNEIKRLTAP.

One can recognise a Helicase ATP-binding domain in the interval 25–411; the sequence is RGISCGAKEQ…TGGVATEQLI (387 aa). An ATP-binding site is contributed by 38–45; it reads GVTGSGKT. A Beta-hairpin motif is present at residues 91–114; sequence YYDYYQPEAYIPQSDVYIEKDALI. Residues 427-591 form the Helicase C-terminal domain; the sequence is DGQIHDVMCE…IVPRTIQKPV (165 aa). The disordered stretch occupies residues 593-615; the sequence is TSLSERVGSSRKKVSRDTNTDPA. The region spanning 616–651 is the UVR domain; the sequence is NRDIVELQKEMLLCAENLDFERAVEIRNEIKRLTAP.

Belongs to the UvrB family. In terms of assembly, forms a heterotetramer with UvrA during the search for lesions. Interacts with UvrC in an incision complex.

The protein resides in the cytoplasm. Functionally, the UvrABC repair system catalyzes the recognition and processing of DNA lesions. A damage recognition complex composed of 2 UvrA and 2 UvrB subunits scans DNA for abnormalities. Upon binding of the UvrA(2)B(2) complex to a putative damaged site, the DNA wraps around one UvrB monomer. DNA wrap is dependent on ATP binding by UvrB and probably causes local melting of the DNA helix, facilitating insertion of UvrB beta-hairpin between the DNA strands. Then UvrB probes one DNA strand for the presence of a lesion. If a lesion is found the UvrA subunits dissociate and the UvrB-DNA preincision complex is formed. This complex is subsequently bound by UvrC and the second UvrB is released. If no lesion is found, the DNA wraps around the other UvrB subunit that will check the other stand for damage. The protein is UvrABC system protein B of Anaplasma marginale (strain St. Maries).